Consider the following 702-residue polypeptide: Polyribonucleotide nucleotidyltransferase (702 aa).

Mg(2+) contacts are provided by Asp485 and Asp491. The KH domain maps to 552–611; sequence PKTSTLQIDPEKIRDVIGAGGKVINKIIADTGVKIDIKEDGLVYVSSAESEGVKEAVKII. The 69-residue stretch at 621–689 folds into the S1 motif domain; the sequence is GEIYLGKVTK…SQGRINLSRK (69 aa).

It belongs to the polyribonucleotide nucleotidyltransferase family. Mg(2+) is required as a cofactor.

It localises to the cytoplasm. It carries out the reaction RNA(n+1) + phosphate = RNA(n) + a ribonucleoside 5'-diphosphate. Involved in mRNA degradation. Catalyzes the phosphorolysis of single-stranded polyribonucleotides processively in the 3'- to 5'-direction. The polypeptide is Polyribonucleotide nucleotidyltransferase (Clostridium perfringens (strain SM101 / Type A)).